The sequence spans 208 residues: Putative archaetidylserine decarboxylase proenzyme (208 aa).

Residue serine 171 is the Schiff-base intermediate with substrate; via pyruvic acid of the active site. Position 171 is a pyruvic acid (Ser); by autocatalysis (serine 171).

It belongs to the phosphatidylserine decarboxylase family. PSD-A subfamily. In terms of assembly, heterodimer of a large membrane-associated beta subunit and a small pyruvoyl-containing alpha subunit. Requires pyruvate as cofactor. Post-translationally, is synthesized initially as an inactive proenzyme. Formation of the active enzyme involves a self-maturation process in which the active site pyruvoyl group is generated from an internal serine residue via an autocatalytic post-translational modification. Two non-identical subunits are generated from the proenzyme in this reaction, and the pyruvate is formed at the N-terminus of the alpha chain, which is derived from the carboxyl end of the proenzyme. The post-translation cleavage follows an unusual pathway, termed non-hydrolytic serinolysis, in which the side chain hydroxyl group of the serine supplies its oxygen atom to form the C-terminus of the beta chain, while the remainder of the serine residue undergoes an oxidative deamination to produce ammonia and the pyruvoyl prosthetic group on the alpha chain.

The protein resides in the cell membrane. It carries out the reaction archaetidylserine + H(+) = archaetidylethanolamine + CO2. In terms of biological role, catalyzes the formation of archaetidylethanolamine (PtdEtn) from archaetidylserine (PtdSer). This Methanococcoides burtonii (strain DSM 6242 / NBRC 107633 / OCM 468 / ACE-M) protein is Putative archaetidylserine decarboxylase proenzyme.